Here is a 629-residue protein sequence, read N- to C-terminus: Bifunctional protein ArgHA (629 aa).

An argininosuccinate lyase region spans residues 1–499 (MALWGGRFSQ…NLPRSRSDLV (499 aa)). Residues 464–598 (ISIRAARLTD…EKVLKDCDMC (135 aa)) enclose the N-acetyltransferase domain. Residues 500-629 (KAVGTFAVTE…INLKAEKLAS (130 aa)) form an amino-acid acetyltransferase region.

In the N-terminal section; belongs to the lyase 1 family. Argininosuccinate lyase subfamily. It in the C-terminal section; belongs to the acetyltransferase family. ArgA subfamily.

It is found in the cytoplasm. It catalyses the reaction 2-(N(omega)-L-arginino)succinate = fumarate + L-arginine. The enzyme catalyses L-glutamate + acetyl-CoA = N-acetyl-L-glutamate + CoA + H(+). It participates in amino-acid biosynthesis; L-arginine biosynthesis; N(2)-acetyl-L-ornithine from L-glutamate: step 1/4. The protein operates within amino-acid biosynthesis; L-arginine biosynthesis; L-arginine from L-ornithine and carbamoyl phosphate: step 3/3. The protein is Bifunctional protein ArgHA (argHA) of Moritella abyssi.